A 215-amino-acid polypeptide reads, in one-letter code: Cytochrome b6 (215 aa).

The helical transmembrane segment at 32 to 52 threads the bilayer; sequence IFYCLGGITLTCFLVQIATGF. Position 35 (Cys-35) interacts with heme c. Heme b is bound by residues His-86 and His-100. A run of 3 helical transmembrane segments spans residues 90-110, 116-136, and 186-206; these read ASMM…TGGF, LTWV…VTGY, and LHTF…FLMI. Residues His-187 and His-202 each contribute to the heme b site.

Belongs to the cytochrome b family. PetB subfamily. The 4 large subunits of the cytochrome b6-f complex are cytochrome b6, subunit IV (17 kDa polypeptide, PetD), cytochrome f and the Rieske protein, while the 4 small subunits are PetG, PetL, PetM and PetN. The complex functions as a dimer. The cofactor is heme b. Heme c is required as a cofactor.

It is found in the plastid. Its subcellular location is the chloroplast thylakoid membrane. Its function is as follows. Component of the cytochrome b6-f complex, which mediates electron transfer between photosystem II (PSII) and photosystem I (PSI), cyclic electron flow around PSI, and state transitions. The sequence is that of Cytochrome b6 from Adiantum capillus-veneris (Maidenhair fern).